The primary structure comprises 495 residues: Ribosome biogenesis protein YTM1 (495 aa).

A ubiquitin-like (UBL) domain region spans residues 15 to 97 (VKVIFTTTEP…ETTLTLQYVR (83 aa)). 7 WD repeats span residues 129-168 (WSSA…IATS), 175-213 (GHTA…HFTG), 223-262 (GHTG…APEP), 264-295 (ASLL…LWSI), 296-337 (HTAP…STLT), 386-426 (GHAN…PATK), and 458-495 (GDGC…TEQK).

This sequence belongs to the WD repeat WDR12/YTM1 family. Component of the NOP7 complex, composed of ERB1, NOP7 and YTM1. The complex is held together by ERB1, which interacts with NOP7 via its N-terminal domain and with YTM1 via a high-affinity interaction between the seven-bladed beta-propeller domains of the 2 proteins. The NOP7 complex associates with the 66S pre-ribosome. Interacts (via UBL domain) with MDN1 (via VWFA/MIDAS domain).

Its subcellular location is the nucleus. The protein resides in the nucleolus. The protein localises to the nucleoplasm. Functionally, component of the NOP7 complex, which is required for maturation of the 25S and 5.8S ribosomal RNAs and formation of the 60S ribosome. This is Ribosome biogenesis protein YTM1 from Chaetomium thermophilum (strain DSM 1495 / CBS 144.50 / IMI 039719) (Thermochaetoides thermophila).